A 388-amino-acid chain; its full sequence is Succinate--CoA ligase [ADP-forming] subunit beta (388 aa).

The ATP-grasp domain occupies 9-245 (KELLAGYGLP…KSQENERELK (237 aa)). ATP contacts are provided by residues Lys-46, 53 to 55 (GRG), Glu-100, Tyr-103, and Glu-108. 2 residues coordinate Mg(2+): Asn-200 and Asp-214. Substrate is bound by residues Asn-265 and 322-324 (GIV).

It belongs to the succinate/malate CoA ligase beta subunit family. Heterotetramer of two alpha and two beta subunits. It depends on Mg(2+) as a cofactor.

The enzyme catalyses succinate + ATP + CoA = succinyl-CoA + ADP + phosphate. It carries out the reaction GTP + succinate + CoA = succinyl-CoA + GDP + phosphate. Its pathway is carbohydrate metabolism; tricarboxylic acid cycle; succinate from succinyl-CoA (ligase route): step 1/1. Succinyl-CoA synthetase functions in the citric acid cycle (TCA), coupling the hydrolysis of succinyl-CoA to the synthesis of either ATP or GTP and thus represents the only step of substrate-level phosphorylation in the TCA. The beta subunit provides nucleotide specificity of the enzyme and binds the substrate succinate, while the binding sites for coenzyme A and phosphate are found in the alpha subunit. This chain is Succinate--CoA ligase [ADP-forming] subunit beta, found in Neisseria meningitidis serogroup C / serotype 2a (strain ATCC 700532 / DSM 15464 / FAM18).